Reading from the N-terminus, the 616-residue chain is MALLQISEPGLSAAPHQRRLAAGIDLGTTNSLVATVRSGQAETLADHEGRHLLPSVVHYQQQGHSVGYDARTNAALDTANTISSVKRLMGRSLADIQQRYPHLPYQFQASENGLPMIETAAGLLNPVRVSADILKALAARATEALAGELDGVVITVPAYFDDAQRQGTKDAARLAGLHVLRLLNEPTAAAIAYGLDSGQEGVIAVYDLGGGTFDISILRLSRGVFEVLATGGDSALGGDDFDHLLADYIREQAGIPDRSDNRVQRELLDAAIAAKIALSDADSVTVNVAGWQGEISREQFNELIAPLVKRTLLACRRVLKDAGVEADEVMEVVMVGGSTRVPLVRERVGEFFGRPPLTSIDPDKVVAIGAAIQADILVGNKPDSEMLLLDVIPLSLGLETMGGLVEKVIPRNTTIPVARAQDFTTFKDGQTAMSIHVMQGERELVQDCRSLARFALRGIPALPAGGAHIRVTFQVDADGLLSVTAMEKSTGVEASIQVKPSYGLTDSEIASMIKDSMSYAEQDVKARMLAEQKVEAARVLESLHGALAADAALLSTAERQVIDDAAAHLSEVAQGDDVDAIEQAIKNVDKQTQDFAARRMDQSVRRALKGHSVDEV.

The protein belongs to the heat shock protein 70 family.

Its function is as follows. Chaperone involved in the maturation of iron-sulfur cluster-containing proteins. Has a low intrinsic ATPase activity which is markedly stimulated by HscB. Involved in the maturation of IscU. This chain is Chaperone protein HscA, found in Escherichia coli O17:K52:H18 (strain UMN026 / ExPEC).